A 70-amino-acid chain; its full sequence is Protein SlyX homolog (70 aa).

The tract at residues 51–70 (RMREAEANRPGPTNEPPPHY) is disordered.

It belongs to the SlyX family.

In Nitrobacter hamburgensis (strain DSM 10229 / NCIMB 13809 / X14), this protein is Protein SlyX homolog.